The primary structure comprises 979 residues: Glutamate receptor ionotropic, kainate 5 (979 aa).

Residues 1-14 (MPAELLLLLIVAFA) form the signal peptide. Over 15-544 (NPSCQVLSSL…YFSFLDPFSP (530 aa)) the chain is Extracellular. 3 disulfides stabilise this stretch: cysteine 36-cysteine 292, cysteine 83-cysteine 334, and cysteine 165-cysteine 170. 10 N-linked (GlcNAc...) asparagine glycosylation sites follow: asparagine 219, asparagine 271, asparagine 285, asparagine 322, asparagine 372, asparagine 394, asparagine 400, asparagine 407, asparagine 414, and asparagine 478. Residues 545–565 (AVWLFMLLAYLAVSCVLFLAA) form a helical membrane-spanning segment. Residues 566 to 622 (RLSPYEWYNPHPCLRARPHILENQYTLGNSLWFPVGGFMQQGSEIMPRALSTRCVSG) lie on the Cytoplasmic side of the membrane. A helical membrane pass occupies residues 623 to 643 (VWWAFTLIIISSYTANLAAFL). The Extracellular segment spans residues 644–803 (TVQRMEVPVE…HRAKGLGMEN (160 aa)). N-linked (GlcNAc...) asparagine glycosylation occurs at asparagine 735. Residues 804 to 824 (IGGIFVVLICGLIIAVFVAVM) form a helical membrane-spanning segment. Over 825 to 979 (EFIWSTRRSA…TGPRELTEHE (155 aa)) the chain is Cytoplasmic. A compositionally biased stretch (basic residues) spans 856-867 (RKTSRSRRRRRP). Disordered stretches follow at residues 856–875 (RKTS…RALL), 890–925 (LYSA…APTP), and 942–979 (RASG…TEHE). Gly residues predominate over residues 894–903 (GAGGDAGAHG). Residues 912-923 (PGPPGGPRPQAP) show a composition bias toward pro residues.

Belongs to the glutamate-gated ion channel (TC 1.A.10.1) family. GRIK5 subfamily. As to quaternary structure, homotetramer. Heterotetramer with GRIK2. Can form functional heteromeric receptors with GRIK1, GRIK2 and GRIK3. Forms a heteromeric complex with GRIK2. As to expression, expressed in the hippocampal mossy fiber synapses (at protein level).

It localises to the cell membrane. It is found in the postsynaptic cell membrane. The protein localises to the presynaptic cell membrane. Ionotropic glutamate receptor that functions as a cation-permeable ligand-gated ion channel, gated by L-glutamate and the glutamatergic agonist kainic acid. Cannot form functional channels on its own and produces channel activity only in heteromeric assembly with GRIK2 subunit. Can form functional heteromeric receptors with GRIK1 and GRIK3. In Mus musculus (Mouse), this protein is Glutamate receptor ionotropic, kainate 5 (Grik5).